We begin with the raw amino-acid sequence, 382 residues long: Na(+)/H(+) antiporter NhaA 2 (382 aa).

Helical transmembrane passes span 7 to 27 (MALS…LALL), 58 to 78 (LDLW…GLEL), 94 to 114 (SLPI…FAAI), 124 to 144 (GWAI…MLLG), 153 to 173 (LFLL…IALF), 178 to 198 (LSAL…LLNY), 199 to 219 (YHIT…IAML), 255 to 275 (NPWV…GIDI), 291 to 311 (IILG…FIAI), 327 to 347 (FYGI…IDGL), and 361 to 381 (LAIL…LKIV).

Belongs to the NhaA Na(+)/H(+) (TC 2.A.33) antiporter family.

It is found in the cell inner membrane. It carries out the reaction Na(+)(in) + 2 H(+)(out) = Na(+)(out) + 2 H(+)(in). Its function is as follows. Na(+)/H(+) antiporter that extrudes sodium in exchange for external protons. This is Na(+)/H(+) antiporter NhaA 2 from Campylobacter jejuni subsp. doylei (strain ATCC BAA-1458 / RM4099 / 269.97).